Reading from the N-terminus, the 200-residue chain is NAD(P)H dehydrogenase (quinone) (200 aa).

Residues 7–199 (LAIVFYSSTG…RQVELTAKLL (193 aa)) enclose the Flavodoxin-like domain. FMN contacts are provided by residues 13 to 18 (SSTGTG), 86 to 88 (TRF), 121 to 127 (SAQNVNG), and His-142.

The protein belongs to the WrbA family. As to quaternary structure, homotetramer. Requires FMN as cofactor.

The enzyme catalyses a quinone + NADH + H(+) = a quinol + NAD(+). The catalysed reaction is a quinone + NADPH + H(+) = a quinol + NADP(+). The protein is NAD(P)H dehydrogenase (quinone) of Deinococcus radiodurans (strain ATCC 13939 / DSM 20539 / JCM 16871 / CCUG 27074 / LMG 4051 / NBRC 15346 / NCIMB 9279 / VKM B-1422 / R1).